Here is a 465-residue protein sequence, read N- to C-terminus: ATP synthase subunit beta (465 aa).

ATP is bound at residue 155-162; the sequence is GGAGVGKT.

The protein belongs to the ATPase alpha/beta chains family. In terms of assembly, F-type ATPases have 2 components, CF(1) - the catalytic core - and CF(0) - the membrane proton channel. CF(1) has five subunits: alpha(3), beta(3), gamma(1), delta(1), epsilon(1). CF(0) has three main subunits: a(1), b(2) and c(9-12). The alpha and beta chains form an alternating ring which encloses part of the gamma chain. CF(1) is attached to CF(0) by a central stalk formed by the gamma and epsilon chains, while a peripheral stalk is formed by the delta and b chains.

It localises to the cell membrane. It carries out the reaction ATP + H2O + 4 H(+)(in) = ADP + phosphate + 5 H(+)(out). Produces ATP from ADP in the presence of a proton gradient across the membrane. The catalytic sites are hosted primarily by the beta subunits. This is ATP synthase subunit beta from Buchnera aphidicola subsp. Acyrthosiphon pisum (strain 5A).